Reading from the N-terminus, the 523-residue chain is GMP synthase [glutamine-hydrolyzing] (523 aa).

Positions 18 to 208 (KILIVDFGGQ…LYNVCGAKGD (191 aa)) constitute a Glutamine amidotransferase type-1 domain. Catalysis depends on Cys-95, which acts as the Nucleophile. Active-site residues include His-182 and Glu-184. Residues 209–398 (WNMKSFLAEA…LGLPDYLVHR (190 aa)) enclose the GMPS ATP-PPase domain. ATP is bound at residue 236–242 (SGGVDSS).

As to quaternary structure, homodimer.

It catalyses the reaction XMP + L-glutamine + ATP + H2O = GMP + L-glutamate + AMP + diphosphate + 2 H(+). It participates in purine metabolism; GMP biosynthesis; GMP from XMP (L-Gln route): step 1/1. In terms of biological role, catalyzes the synthesis of GMP from XMP. This is GMP synthase [glutamine-hydrolyzing] from Treponema denticola (strain ATCC 35405 / DSM 14222 / CIP 103919 / JCM 8153 / KCTC 15104).